Reading from the N-terminus, the 495-residue chain is UDP-N-acetylmuramoyl-L-alanyl-D-glutamate--2,6-diaminopimelate ligase (495 aa).

UDP-N-acetyl-alpha-D-muramoyl-L-alanyl-D-glutamate-binding positions include leucine 27, serine 29, and 44–46; that span reads HQT. 116-122 serves as a coordination point for ATP; the sequence is GTNGKTT. UDP-N-acetyl-alpha-D-muramoyl-L-alanyl-D-glutamate is bound by residues asparagine 157, 158 to 159, serine 185, glutamine 191, and arginine 193; that span reads TT. Position 225 is an N6-carboxylysine (lysine 225). Residues arginine 390, 414–417, glycine 465, and glutamate 469 each bind meso-2,6-diaminopimelate; that span reads DNPR. Residues 414–417 carry the Meso-diaminopimelate recognition motif motif; sequence DNPR.

This sequence belongs to the MurCDEF family. MurE subfamily. Mg(2+) is required as a cofactor. In terms of processing, carboxylation is probably crucial for Mg(2+) binding and, consequently, for the gamma-phosphate positioning of ATP.

The protein localises to the cytoplasm. The enzyme catalyses UDP-N-acetyl-alpha-D-muramoyl-L-alanyl-D-glutamate + meso-2,6-diaminopimelate + ATP = UDP-N-acetyl-alpha-D-muramoyl-L-alanyl-gamma-D-glutamyl-meso-2,6-diaminopimelate + ADP + phosphate + H(+). The protein operates within cell wall biogenesis; peptidoglycan biosynthesis. Its function is as follows. Catalyzes the addition of meso-diaminopimelic acid to the nucleotide precursor UDP-N-acetylmuramoyl-L-alanyl-D-glutamate (UMAG) in the biosynthesis of bacterial cell-wall peptidoglycan. This chain is UDP-N-acetylmuramoyl-L-alanyl-D-glutamate--2,6-diaminopimelate ligase, found in Photorhabdus laumondii subsp. laumondii (strain DSM 15139 / CIP 105565 / TT01) (Photorhabdus luminescens subsp. laumondii).